Here is a 544-residue protein sequence, read N- to C-terminus: MATPLQPFLTKTHKQNPIIGFNILTFVVTLFVALFLVVFLVAPYQFEIKHSNLCKTAQDSQLCLSYVSEIVTTESDGVTVLKKFLVKYVHQMNNAIPVVRKIKNQINDIRQQGALTDCLELLDQSVDLVSDSIAAIDKRSRSEHANAQSWLSGVLTNHVTCLDELTSFSLSTKNGTVLDELITRAKVALAMLASVTTPNDEVLRQGLGKMPYWVSSRDRKLMESSGKDIIANRVVAQDGTGDYQTLAEAVAAAPDKNKTRYVIYVKMGIYKENVVVTKKKMNLMIVGDGMNATIITGSLNVVDGSTFPSNTLAAVGQGFILQDICIQNTAGPEKDQAVALRVGADMSVINRCRIDAYQDTLYAHSQRQFYRDSYVTGTVDFIFGNAAVVFQKCQIVARKPNKRQKNMVTAQGRTDPNQATGTSIQFCDIIASPDLEPVMNEYKTYLGRPWKKHSRTVVMQSYLDGHIDPSGWFEWRGDFALKTLYYGEFMNNGPGAGTSKRVKWPGYHVITDPNEAMPFTVAELIQGGSWLNSTSVAYVEGLVE.

3 N-linked (GlcNAc...) asparagine glycosylation sites follow: asparagine 174, asparagine 257, and asparagine 291. Substrate is bound by residues threonine 306 and glutamine 336. Aspartate 359 functions as the Proton donor in the catalytic mechanism. Catalysis depends on aspartate 380, which acts as the Nucleophile. Substrate-binding residues include arginine 448 and tryptophan 450. Residue asparagine 532 is glycosylated (N-linked (GlcNAc...) asparagine).

The protein in the N-terminal section; belongs to the PMEI family. This sequence in the C-terminal section; belongs to the pectinesterase family.

The protein localises to the secreted. The protein resides in the cell wall. The catalysed reaction is [(1-&gt;4)-alpha-D-galacturonosyl methyl ester](n) + n H2O = [(1-&gt;4)-alpha-D-galacturonosyl](n) + n methanol + n H(+). Its pathway is glycan metabolism; pectin degradation; 2-dehydro-3-deoxy-D-gluconate from pectin: step 1/5. In terms of biological role, acts in the modification of cell walls via demethylesterification of cell wall pectin. This chain is Pectinesterase 3 (PME3), found in Solanum lycopersicum (Tomato).